The sequence spans 327 residues: Inactive peptidyl-prolyl cis-trans isomerase FKBP6 (327 aa).

Residues 1–20 form a disordered region; the sequence is MSVFSRLRNGIPPSRDDCQS. In terms of domain architecture, PPIase FKBP-type spans 54–143; the sequence is DASVLVKYSG…LFEIELIDFL (90 aa). TPR repeat units follow at residues 171–204, 219–252, and 253–286; these read AATE…LHRR, LLVL…DKRN, and AKAL…QPCN.

This sequence belongs to the FKBP6 family. As to quaternary structure, interacts with HSP72/HSPA2 and CLTC. Interacts with GAPDH; leading to inhibit GAPDH catalytic activity. Interacts (via TPR repeats) with HSP90.

It localises to the cytoplasm. It is found in the cytosol. The protein localises to the nucleus. Its subcellular location is the chromosome. Its function is as follows. Co-chaperone required during spermatogenesis to repress transposable elements and prevent their mobilization, which is essential for the germline integrity. Acts via the piRNA metabolic process, which mediates the repression of transposable elements during meiosis by forming complexes composed of piRNAs and Piwi proteins and govern the methylation and subsequent repression of transposons. Acts as a co-chaperone via its interaction with HSP90 and is required for the piRNA amplification process, the secondary piRNA biogenesis. May be required together with HSP90 in removal of 16 nucleotide ping-pong by-products from Piwi complexes, possibly facilitating turnover of Piwi complexes. This chain is Inactive peptidyl-prolyl cis-trans isomerase FKBP6 (Fkbp6), found in Rattus norvegicus (Rat).